Here is a 350-residue protein sequence, read N- to C-terminus: Small ribosomal subunit biogenesis GTPase RsgA (350 aa).

Residues 1–17 (MSKNKLSKGQQRRVNAN) are compositionally biased toward polar residues. The interval 1–33 (MSKNKLSKGQQRRVNANHQRRLKTSKEKPDYDD) is disordered. A CP-type G domain is found at 104-273 (TSVLTRPDFY…VIDSPGVREF (170 aa)). Residues 160–163 (NKID) and 214–222 (GQSGVGKSS) each bind GTP. Zn(2+) contacts are provided by C297, C302, H304, and C310.

It belongs to the TRAFAC class YlqF/YawG GTPase family. RsgA subfamily. Monomer. Associates with 30S ribosomal subunit, binds 16S rRNA. The cofactor is Zn(2+).

The protein localises to the cytoplasm. In terms of biological role, one of several proteins that assist in the late maturation steps of the functional core of the 30S ribosomal subunit. Helps release RbfA from mature subunits. May play a role in the assembly of ribosomal proteins into the subunit. Circularly permuted GTPase that catalyzes slow GTP hydrolysis, GTPase activity is stimulated by the 30S ribosomal subunit. In Escherichia coli (strain ATCC 8739 / DSM 1576 / NBRC 3972 / NCIMB 8545 / WDCM 00012 / Crooks), this protein is Small ribosomal subunit biogenesis GTPase RsgA.